The sequence spans 203 residues: Translation initiation factor IF-3 (203 aa).

Positions 172-182 (EAPKNEKKTKE) are enriched in basic and acidic residues. The segment at 172–203 (EAPKNEKKTKENNPPFNRINLMKGENHAKNED) is disordered.

This sequence belongs to the IF-3 family. Monomer.

The protein resides in the cytoplasm. In terms of biological role, IF-3 binds to the 30S ribosomal subunit and shifts the equilibrium between 70S ribosomes and their 50S and 30S subunits in favor of the free subunits, thus enhancing the availability of 30S subunits on which protein synthesis initiation begins. This is Translation initiation factor IF-3 from Helicobacter pylori (strain J99 / ATCC 700824) (Campylobacter pylori J99).